A 332-amino-acid chain; its full sequence is MSDTITTRTYSADAKSRDVRPRESERDETQQDETQVCPECSGHLVTDEEHGETICEDCGLVVEDTVVDRGPEWRAFDSAERDSKSRVGAPTTKMMHDKGLSTNIGWQNKDAYGKSLSPRQREQMQRLRTWNERFRTRDSKERNLKQALGEIDRMASALGLPENVRETASVIYRRALNDDLLPGRSIEGVATSALYASARMAGTPRSLDELEKVSRVDKMELTRTYRYIVRELKLEIKPADPEQYVPRFASELGLSDEAERQARQLLRDAKETGIHSGKSPVGLAAAAVYAAALLTNEKVTQSEVSTVADISEVTIRNRYKELLEVQDGTLLA.

A compositionally biased stretch (polar residues) spans 1-10 (MSDTITTRTY). Residues 1–36 (MSDTITTRTYSADAKSRDVRPRESERDETQQDETQV) form a disordered region. A compositionally biased stretch (basic and acidic residues) spans 14–29 (AKSRDVRPRESERDET). Residues 33-63 (ETQVCPECSGHLVTDEEHGETICEDCGLVVE) form a TFIIB-type zinc finger. Zn(2+) is bound by residues Cys-37, Cys-40, Cys-55, and Cys-58. The disordered stretch occupies residues 77–106 (DSAERDSKSRVGAPTTKMMHDKGLSTNIGW). Tandem repeats lie at residues 149 to 232 (GEID…VREL) and 243 to 324 (QYVP…ELLE).

It belongs to the TFIIB family.

Its function is as follows. Stabilizes TBP binding to an archaeal box-A promoter. Also responsible for recruiting RNA polymerase II to the pre-initiation complex (DNA-TBP-TFIIB). The protein is Transcription initiation factor IIB 2 of Haloferax volcanii (strain ATCC 29605 / DSM 3757 / JCM 8879 / NBRC 14742 / NCIMB 2012 / VKM B-1768 / DS2) (Halobacterium volcanii).